Consider the following 564-residue polypeptide: Dihydroxy-acid dehydratase (564 aa).

C53 contacts [2Fe-2S] cluster. D85 lines the Mg(2+) pocket. C126 serves as a coordination point for [2Fe-2S] cluster. Residues D127 and K128 each contribute to the Mg(2+) site. K128 carries the N6-carboxylysine modification. [2Fe-2S] cluster is bound at residue C203. E454 is a Mg(2+) binding site. S480 serves as the catalytic Proton acceptor.

Belongs to the IlvD/Edd family. In terms of assembly, homodimer. [2Fe-2S] cluster serves as cofactor. Mg(2+) is required as a cofactor.

The enzyme catalyses (2R)-2,3-dihydroxy-3-methylbutanoate = 3-methyl-2-oxobutanoate + H2O. It catalyses the reaction (2R,3R)-2,3-dihydroxy-3-methylpentanoate = (S)-3-methyl-2-oxopentanoate + H2O. The protein operates within amino-acid biosynthesis; L-isoleucine biosynthesis; L-isoleucine from 2-oxobutanoate: step 3/4. It functions in the pathway amino-acid biosynthesis; L-valine biosynthesis; L-valine from pyruvate: step 3/4. Functionally, functions in the biosynthesis of branched-chain amino acids. Catalyzes the dehydration of (2R,3R)-2,3-dihydroxy-3-methylpentanoate (2,3-dihydroxy-3-methylvalerate) into 2-oxo-3-methylpentanoate (2-oxo-3-methylvalerate) and of (2R)-2,3-dihydroxy-3-methylbutanoate (2,3-dihydroxyisovalerate) into 2-oxo-3-methylbutanoate (2-oxoisovalerate), the penultimate precursor to L-isoleucine and L-valine, respectively. This Mycobacterium leprae (strain TN) protein is Dihydroxy-acid dehydratase.